Consider the following 352-residue polypeptide: Histidinol-phosphate aminotransferase (352 aa).

K210 is modified (N6-(pyridoxal phosphate)lysine).

This sequence belongs to the class-II pyridoxal-phosphate-dependent aminotransferase family. Histidinol-phosphate aminotransferase subfamily. Homodimer. It depends on pyridoxal 5'-phosphate as a cofactor.

The catalysed reaction is L-histidinol phosphate + 2-oxoglutarate = 3-(imidazol-4-yl)-2-oxopropyl phosphate + L-glutamate. Its pathway is amino-acid biosynthesis; L-histidine biosynthesis; L-histidine from 5-phospho-alpha-D-ribose 1-diphosphate: step 7/9. This is Histidinol-phosphate aminotransferase from Clostridium acetobutylicum (strain ATCC 824 / DSM 792 / JCM 1419 / IAM 19013 / LMG 5710 / NBRC 13948 / NRRL B-527 / VKM B-1787 / 2291 / W).